The chain runs to 329 residues: MSNSMLDKNKAILTGGGALLLGLIVLFYLAYRPKAEVLQGFLEAREYSVSSKVPGRIEKVFVKKGDHIKKGDLVFSISSPELEAKLAQAEAGHKAAKALSDEVKRGSRDETINSARDVWQAAKSQATLAKETYKRVQDLYDNGVASLQKRDEAYAAYESTKYNESAAYQKYKMALGGASSESKIAAKAKESAALGQVNEVESYLKDVKATAPIDGEVSNVLLSGGELSPKGFPVVLMIDLKDSWLKISVPEKYLNEFKVGKEFEGYIPALKKSTKFRVKYLSVMGDFATWKATNNSNTYDMKSYEVEAIPLEELENFRVGMSVLVTIKP.

Residues 11-31 (AILTGGGALLLGLIVLFYLAY) traverse the membrane as a helical segment.

Belongs to the membrane fusion protein (MFP) (TC 8.A.1) family.

It localises to the membrane. This is 36 kDa antigen from Helicobacter pylori (strain ATCC 700392 / 26695) (Campylobacter pylori).